Here is a 457-residue protein sequence, read N- to C-terminus: Siroheme synthase (457 aa).

The segment at 1-204 is precorrin-2 dehydrogenase /sirohydrochlorin ferrochelatase; sequence MDHLPIFCQL…ADEKAVNATT (204 aa). Residues 22–23 and 43–44 each bind NAD(+); these read DV and LN. At S128 the chain carries Phosphoserine. Residues 216–457 are uroporphyrinogen-III C-methyltransferase; sequence GEVVLVGAGP…RDKLNWFSNH (242 aa). P225 lines the S-adenosyl-L-methionine pocket. D248 (proton acceptor) is an active-site residue. The Proton donor role is filled by K270. S-adenosyl-L-methionine is bound by residues 301 to 303, I306, 331 to 332, M382, and G411; these read GGD and TA.

It in the N-terminal section; belongs to the precorrin-2 dehydrogenase / sirohydrochlorin ferrochelatase family. The protein in the C-terminal section; belongs to the precorrin methyltransferase family.

The enzyme catalyses uroporphyrinogen III + 2 S-adenosyl-L-methionine = precorrin-2 + 2 S-adenosyl-L-homocysteine + H(+). The catalysed reaction is precorrin-2 + NAD(+) = sirohydrochlorin + NADH + 2 H(+). It catalyses the reaction siroheme + 2 H(+) = sirohydrochlorin + Fe(2+). It functions in the pathway cofactor biosynthesis; adenosylcobalamin biosynthesis; precorrin-2 from uroporphyrinogen III: step 1/1. It participates in cofactor biosynthesis; adenosylcobalamin biosynthesis; sirohydrochlorin from precorrin-2: step 1/1. Its pathway is porphyrin-containing compound metabolism; siroheme biosynthesis; precorrin-2 from uroporphyrinogen III: step 1/1. The protein operates within porphyrin-containing compound metabolism; siroheme biosynthesis; siroheme from sirohydrochlorin: step 1/1. It functions in the pathway porphyrin-containing compound metabolism; siroheme biosynthesis; sirohydrochlorin from precorrin-2: step 1/1. In terms of biological role, multifunctional enzyme that catalyzes the SAM-dependent methylations of uroporphyrinogen III at position C-2 and C-7 to form precorrin-2 via precorrin-1. Then it catalyzes the NAD-dependent ring dehydrogenation of precorrin-2 to yield sirohydrochlorin. Finally, it catalyzes the ferrochelation of sirohydrochlorin to yield siroheme. The sequence is that of Siroheme synthase from Salmonella paratyphi A (strain ATCC 9150 / SARB42).